The following is a 359-amino-acid chain: Aromatic amino acid aminotransferase (359 aa).

The tract at residues 1–42 (MSERKPPYLRSALDSIPPYRPGRKVVGPDGRSAKLSSNESPF) is disordered. Lysine 223 carries the N6-(pyridoxal phosphate)lysine modification.

This sequence belongs to the class-II pyridoxal-phosphate-dependent aminotransferase family. In terms of assembly, homodimer. It depends on pyridoxal 5'-phosphate as a cofactor.

It carries out the reaction an aromatic L-alpha-amino acid + 2-oxoglutarate = an aromatic oxo-acid + L-glutamate. Its function is as follows. Aminotransferase that catalyzes the conversion of aromatic amino acids and 2-oxoglutarate into corresponding aromatic oxo acids and L-glutamate. This Thermobifida fusca (strain YX) protein is Aromatic amino acid aminotransferase.